The following is a 350-amino-acid chain: Enoyl-[acyl-carrier-protein] reductase, mitochondrial (350 aa).

The N-terminal 14 residues, 1–14 (MNSTRNIISLVRRY), are a transit peptide targeting the mitochondrion. The Proton donor role is filled by tyrosine 69. Residues asparagine 143, 169-172 (NSMV), 192-194 (RDG), 261-264 (YGGM), 286-288 (FWL), and lysine 343 each bind NADP(+).

The protein belongs to the zinc-containing alcohol dehydrogenase family. Quinone oxidoreductase subfamily. In terms of assembly, homodimer.

The protein localises to the mitochondrion. The catalysed reaction is a 2,3-saturated acyl-[ACP] + NADP(+) = a (2E)-enoyl-[ACP] + NADPH + H(+). Its function is as follows. Catalyzes the NADPH-dependent reduction of trans-2-enoyl thioesters in mitochondrial fatty acid synthesis (fatty acid synthesis type II). Fatty acid chain elongation in mitochondria uses acyl carrier protein (ACP) as an acyl group carrier, but the enzyme accepts both ACP and CoA thioesters as substrates in vitro. The protein is Enoyl-[acyl-carrier-protein] reductase, mitochondrial (mecr) of Dictyostelium discoideum (Social amoeba).